Reading from the N-terminus, the 215-residue chain is Cytochrome b6 (215 aa).

The helical transmembrane segment at 32–52 threads the bilayer; that stretch reads LFYCLGGITLTCFLIQVATGF. Residue Cys35 coordinates heme c. Heme b-binding residues include His86 and His100. Transmembrane regions (helical) follow at residues 90–110, 116–136, and 186–206; these read ASMMVLMMVLHVFRVYLTGGF, STWVTGVIMASCTVSFGVTGY, and LHTFVLPLLTAVFMLGHFLMI. Positions 187 and 202 each coordinate heme b.

It belongs to the cytochrome b family. PetB subfamily. As to quaternary structure, the 4 large subunits of the cytochrome b6-f complex are cytochrome b6, subunit IV (17 kDa polypeptide, PetD), cytochrome f and the Rieske protein, while the 4 small subunits are PetG, PetL, PetM and PetN. The complex functions as a dimer. Heme b is required as a cofactor. It depends on heme c as a cofactor.

The protein resides in the plastid. It is found in the chloroplast thylakoid membrane. Its function is as follows. Component of the cytochrome b6-f complex, which mediates electron transfer between photosystem II (PSII) and photosystem I (PSI), cyclic electron flow around PSI, and state transitions. This Bigelowiella natans (Pedinomonas minutissima) protein is Cytochrome b6.